Consider the following 541-residue polypeptide: Protein ST7 homolog (541 aa).

Residues 15 to 35 traverse the membrane as a helical segment; that stretch reads FYVALTGTSSLISGLILIFEW. The tract at residues 62-116 is disordered; it reads DAQSDSSNGSGSSTSSGSSSSSNGGGGGGGGGAGGGGPGAGGGTNSTTTTGTQMP. The segment covering 67-83 has biased composition (low complexity); sequence SSNGSGSSTSSGSSSSS. A compositionally biased stretch (gly residues) spans 84–105; it reads NGGGGGGGGGAGGGGPGAGGGT. Residues 476 to 496 form a helical membrane-spanning segment; it reads LPFFILFTAGLCSFTALLALL.

It belongs to the ST7 family.

It is found in the membrane. This is Protein ST7 homolog from Drosophila pseudoobscura pseudoobscura (Fruit fly).